Reading from the N-terminus, the 88-residue chain is Yop proteins translocation protein S (88 aa).

2 helical membrane-spanning segments follow: residues 15–35 and 49–69; these read WLVL…GTLV and LGFV…ASWL.

Belongs to the FliQ/MopD/SpaQ family.

The protein resides in the cell membrane. Its function is as follows. Component of the Yop secretion machinery. The sequence is that of Yop proteins translocation protein S (yscS) from Yersinia pestis.